Reading from the N-terminus, the 371-residue chain is ADP-ribosylarginine hydrolase Tri1 (371 aa).

The tract at residues 1–61 (MIDLRSPNAL…LQSRACTLTP (61 aa)) is N-terminal extension. An ADP-ribosyl hydrolase domain region spans residues 70–362 (GALLGLAIGD…LFDRAPQVDE (293 aa)). Positions 112, 113, 114, 157, and 313 each coordinate Mg(2+).

The protein belongs to the ADP-ribosylglycohydrolase family. Mg(2+) is required as a cofactor.

It catalyses the reaction N(omega)-(ADP-D-ribosyl)-L-arginyl-[protein] + H2O = ADP-D-ribose + L-arginyl-[protein]. In terms of biological role, immunity component of an interbacterial competition system (also called effector-immunity systems). Expression in E.coli neutralizes the toxic effects of non-cognate S.proteamaculans effector protein Tre1 (Tre1-Sp); cannot be co-purified with Tre1-Sp from E.coli, suggesting they do not form a stable complex. Probably acts as an arginine mono-ADP-ribosylhydrolase, mediating the removal of mono-ADP-ribose attached to arginine residues on proteins. Probably de-ADP-ribosylates FtsZ and possibly other proteins; the ability to hydrolyze ADP-ribosyl moieties is not essential for neutralization of its cognate toxin, strongly suggesting its N-terminal extension occludes the active site of cognate toxin Tre1. This Pseudomonas putida (strain GB-1) protein is ADP-ribosylarginine hydrolase Tri1.